The primary structure comprises 206 residues: Uridine kinase (206 aa).

11-18 is an ATP binding site; the sequence is GGTGSGKS.

This sequence belongs to the uridine kinase family.

Its subcellular location is the cytoplasm. It carries out the reaction uridine + ATP = UMP + ADP + H(+). The catalysed reaction is cytidine + ATP = CMP + ADP + H(+). Its pathway is pyrimidine metabolism; CTP biosynthesis via salvage pathway; CTP from cytidine: step 1/3. It participates in pyrimidine metabolism; UMP biosynthesis via salvage pathway; UMP from uridine: step 1/1. In Clostridium botulinum (strain Langeland / NCTC 10281 / Type F), this protein is Uridine kinase.